The following is a 503-amino-acid chain: Xylan O-acetyltransferase 12 (503 aa).

Topologically, residues 1–54 (MWSALFSHLREVHKRSGVKEEKLIMKSPAAAGEAAGCHKPQATATNKMTVLQSP) are cytoplasmic. A helical; Signal-anchor for type II membrane protein transmembrane segment spans residues 55–77 (LGLRTILTSLVAFFIVVSSVSLL). Residues 78 to 503 (FDRSQDAQAQ…EFLYAYLMHK (426 aa)) are Lumenal-facing. 4 disulfides stabilise this stretch: Cys153-Cys204, Cys175-Cys240, Cys184-Cys484, and Cys400-Cys480. N-linked (GlcNAc...) asparagine glycosylation is found at Asn154, Asn164, Asn190, and Asn210. Residues 227–229 (GDS) carry the GDS motif motif. The active-site Nucleophile is the Ser229. Residues Asn256, Asn268, Asn373, Asn402, and Asn443 are each glycosylated (N-linked (GlcNAc...) asparagine). Asp479 serves as the catalytic Proton donor. Positions 479–482 (DCTH) match the DXXH motif motif. His482 serves as the catalytic Proton acceptor.

It belongs to the PC-esterase family. TBL subfamily.

It localises to the golgi apparatus membrane. Its function is as follows. Xylan acetyltransferase required for 2-O- and 3-O-monoacetylation of xylosyl residues in xylan. Catalyzes the 2-O-acetylation of xylan, followed by nonenzymatic acetyl migration to the O-3 position, resulting in products that are monoacetylated at both O-2 and O-3 positions. This is Xylan O-acetyltransferase 12 from Oryza sativa subsp. japonica (Rice).